The chain runs to 188 residues: MKTAQEFRAGQVAIINGAPWVIQKAEFNKSGRNSAVVKMKLKNLLNGSATETVYKADDKLEPVILERKEVTYSYFADPLYVFMDNEFNQYEIEKDDLEGVMTFIEDGMTDVCEAVFYNDKVISVELPTTIVREIAYTEPSVRGDTSGKVMKTARLKNGAELQVSAFCEIGDSIEIDTRTGEYKSRVKA.

It belongs to the elongation factor P family.

It is found in the cytoplasm. The protein operates within protein biosynthesis; polypeptide chain elongation. Involved in peptide bond synthesis. Stimulates efficient translation and peptide-bond synthesis on native or reconstituted 70S ribosomes in vitro. Probably functions indirectly by altering the affinity of the ribosome for aminoacyl-tRNA, thus increasing their reactivity as acceptors for peptidyl transferase. This chain is Elongation factor P, found in Stutzerimonas stutzeri (strain A1501) (Pseudomonas stutzeri).